The following is a 559-amino-acid chain: Glucose-6-phosphate isomerase (559 aa).

Glutamate 363 acts as the Proton donor in catalysis. Catalysis depends on residues histidine 394 and lysine 523.

Belongs to the GPI family.

Its subcellular location is the cytoplasm. It catalyses the reaction alpha-D-glucose 6-phosphate = beta-D-fructose 6-phosphate. It participates in carbohydrate biosynthesis; gluconeogenesis. It functions in the pathway carbohydrate degradation; glycolysis; D-glyceraldehyde 3-phosphate and glycerone phosphate from D-glucose: step 2/4. Catalyzes the reversible isomerization of glucose-6-phosphate to fructose-6-phosphate. This is Glucose-6-phosphate isomerase from Bartonella henselae (strain ATCC 49882 / DSM 28221 / CCUG 30454 / Houston 1) (Rochalimaea henselae).